Reading from the N-terminus, the 273-residue chain is uncharacterized protein (273 aa).

2 helical membrane passes run 24–44 (VGVS…VTIL) and 103–123 (IVGP…EAWA). The interval 132–194 (SDLPHHGRQS…QPPAQTQPYR (63 aa)) is disordered. Basic residues predominate over residues 164–179 (SSHHIRSPAVARHHKT). Over residues 183 to 192 (TTQPPAQTQP) the composition is skewed to low complexity.

Its subcellular location is the cell membrane. This is an uncharacterized protein from Sinorhizobium fredii (strain NBRC 101917 / NGR234).